Reading from the N-terminus, the 200-residue chain is Holliday junction branch migration complex subunit RuvA (200 aa).

The interval 1–63 is domain I; sequence MIGKLSGKID…EEHIHLYGFL (63 aa). The segment at 64–142 is domain II; it reads TLEEKNFFNL…KIFSSSAIIK (79 aa). The interval 142–146 is flexible linker; sequence KDSSN. The domain III stretch occupies residues 147 to 200; sequence ISSVEINEVIKALVNLGFTRFEAQNTVQGIITQNTKISIDELIKTALKNRNSSF.

Belongs to the RuvA family. In terms of assembly, homotetramer. Forms an RuvA(8)-RuvB(12)-Holliday junction (HJ) complex. HJ DNA is sandwiched between 2 RuvA tetramers; dsDNA enters through RuvA and exits via RuvB. An RuvB hexamer assembles on each DNA strand where it exits the tetramer. Each RuvB hexamer is contacted by two RuvA subunits (via domain III) on 2 adjacent RuvB subunits; this complex drives branch migration. In the full resolvosome a probable DNA-RuvA(4)-RuvB(12)-RuvC(2) complex forms which resolves the HJ.

The protein resides in the cytoplasm. Functionally, the RuvA-RuvB-RuvC complex processes Holliday junction (HJ) DNA during genetic recombination and DNA repair, while the RuvA-RuvB complex plays an important role in the rescue of blocked DNA replication forks via replication fork reversal (RFR). RuvA specifically binds to HJ cruciform DNA, conferring on it an open structure. The RuvB hexamer acts as an ATP-dependent pump, pulling dsDNA into and through the RuvAB complex. HJ branch migration allows RuvC to scan DNA until it finds its consensus sequence, where it cleaves and resolves the cruciform DNA. The sequence is that of Holliday junction branch migration complex subunit RuvA from Rickettsia typhi (strain ATCC VR-144 / Wilmington).